Reading from the N-terminus, the 495-residue chain is 3-octaprenyl-4-hydroxybenzoate carboxy-lyase (495 aa).

Mn(2+) is bound at residue asparagine 172. Residues 175 to 177 (IYR), 189 to 191 (RWL), and 194 to 195 (RG) each bind prenylated FMN. Glutamate 238 lines the Mn(2+) pocket. The Proton donor role is filled by aspartate 287.

This sequence belongs to the UbiD family. In terms of assembly, homohexamer. It depends on prenylated FMN as a cofactor. Requires Mn(2+) as cofactor.

Its subcellular location is the cell membrane. It catalyses the reaction a 4-hydroxy-3-(all-trans-polyprenyl)benzoate + H(+) = a 2-(all-trans-polyprenyl)phenol + CO2. It participates in cofactor biosynthesis; ubiquinone biosynthesis. Functionally, catalyzes the decarboxylation of 3-octaprenyl-4-hydroxy benzoate to 2-octaprenylphenol, an intermediate step in ubiquinone biosynthesis. The polypeptide is 3-octaprenyl-4-hydroxybenzoate carboxy-lyase (Yersinia pseudotuberculosis serotype O:1b (strain IP 31758)).